The primary structure comprises 433 residues: Ornithine decarboxylase 1B, chloroplastic (433 aa).

Residue Lys-96 is modified to N6-(pyridoxal phosphate)lysine. Residues Ser-228, Gly-266, and 299–302 (EPGR) contribute to the pyridoxal 5'-phosphate site. 342 to 343 (YD) provides a ligand contact to substrate. Catalysis depends on Cys-378, which acts as the Proton donor; shared with dimeric partner. Asp-379 is a substrate binding site. Tyr-407 provides a ligand contact to pyridoxal 5'-phosphate.

Belongs to the Orn/Lys/Arg decarboxylase class-II family. In terms of assembly, homodimer. Only the dimer is catalytically active, as the active sites are constructed of residues from both monomers. Pyridoxal 5'-phosphate is required as a cofactor.

The protein resides in the plastid. It is found in the chloroplast. It carries out the reaction L-ornithine + H(+) = putrescine + CO2. Its pathway is alkaloid biosynthesis; nicotine biosynthesis. It functions in the pathway amine and polyamine biosynthesis; putrescine biosynthesis via L-ornithine pathway; putrescine from L-ornithine: step 1/1. Functionally, involved in the biosynthesis of pyridine alkaloid natural products, leading mainly to the production of anabasine, anatabine, nicotine and nornicotine, effective deterrents against herbivores with antiparasitic and pesticide properties (neurotoxins); nornicotine serves as the precursor in the synthesis of the carcinogen compound N'-nitrosonornicotine (NNN). Catalyzes the first and rate-limiting step of polyamine biosynthesis that converts ornithine into putrescine, which is the precursor for the polyamines, spermidine and spermine. Polyamines are essential for cell proliferation and are implicated in cellular processes, ranging from DNA replication to apoptosis. The chain is Ornithine decarboxylase 1B, chloroplastic from Nicotiana tabacum (Common tobacco).